The following is a 236-amino-acid chain: Small ribosomal subunit protein uS2c (236 aa).

The protein belongs to the universal ribosomal protein uS2 family.

The protein localises to the plastid. The protein resides in the chloroplast. The protein is Small ribosomal subunit protein uS2c (rps2) of Pisum sativum (Garden pea).